The primary structure comprises 179 residues: Inner membrane-spanning protein YciB (179 aa).

5 helical membrane passes run I22–V42, M50–N70, W76–M96, L121–L141, and F149–I169.

This sequence belongs to the YciB family.

It localises to the cell inner membrane. In terms of biological role, plays a role in cell envelope biogenesis, maintenance of cell envelope integrity and membrane homeostasis. This is Inner membrane-spanning protein YciB from Salmonella agona (strain SL483).